The sequence spans 146 residues: Hemoglobin subunit beta-2 (146 aa).

The Globin domain maps to 2-146 (EWTDFERATI…VVSSLGRQYH (145 aa)). Positions 63 and 92 each coordinate heme b.

This sequence belongs to the globin family. In terms of assembly, hb2 is a heterotetramer of two alpha chains and two beta-2 chains. As to expression, red blood cells.

In terms of biological role, involved in oxygen transport from gills to the various peripheral tissues. The protein is Hemoglobin subunit beta-2 (hbb2) of Pseudaphritis urvillii (Congolli).